Consider the following 62-residue polypeptide: MTMSRNGKTNKAAYSQRFTRCSVAVAATRSASVVAAAFDFYICIIISTLLSLIVSLASQLLF.

The next 2 membrane-spanning stretches (helical) occupy residues 23 to 39 (VAVAATRSASVVAAAFD) and 33 to 53 (VVAAAFDFYICIIISTLLSLI).

Belongs to the CYSTM1 family. As to quaternary structure, heterodimers. Binds weakly to CYSTM7 and WIH1/CYSTM13. As to expression, mostly expressed in stems, siliques, leaves and flowers and, to a lower extent, in roots.

It localises to the cell membrane. The protein resides in the nucleus. The protein localises to the secreted. Its subcellular location is the cell wall. Its function is as follows. Involved in resistance to abiotic stress. Confers resistance to heavy metal ions (e.g. cadmium (CdCl(2)) and copper (CuCl(2))) by chelating them at the plasma membrane of root cells, thus stopping their entry and reducing their accumulation. The polypeptide is Protein CYSTEINE-RICH TRANSMEMBRANE MODULE 2 (Arabidopsis thaliana (Mouse-ear cress)).